The chain runs to 1501 residues: Opaque-specific ABC transporter CDR3 (1501 aa).

Residues 1 to 502 (MAKTSQAEGQ…KRYWDRMRGD (502 aa)) lie on the Cytoplasmic side of the membrane. The disordered stretch occupies residues 58 to 87 (TYTTATMHPNGINPISDKTDPTLDPESPSF). An ABC transporter 1 domain is found at 140-395 (KYARNIFNKF…FKKMGFVCQD (256 aa)). A helical transmembrane segment spans residues 503-523 (IIVPLSTVAGNIAMALILSSV). N-linked (GlcNAc...) asparagine glycosylation occurs at Asn530. 5 helical membrane-spanning segments follow: residues 540 to 560 (VMYYALLFNAYSSVLEIYNMY), 589 to 609 (FPLKVVCSVLFNLILYFMVNF), 614 to 634 (GAFFFYLLISFCSTLFMSHLF), 653 to 673 (LLLFALSTFSGFAIPVTYMLG), and 755 to 775 (FGVLMAFIIFLFGTTIFFVQT). Topologically, residues 776-1175 (NKSSISKGET…LFQQYWRTPS (400 aa)) are cytoplasmic. Residues 840-1083 (FHWRNLTYTV…LIEYFERNGA (244 aa)) form the ABC transporter 2 domain. ATP is bound at residue 876-883 (GASGAGKT). The next 7 helical transmembrane spans lie at 1176–1196 (YIYSKFAMAVLCSLFNGFTYY), 1212–1232 (IFSMFVVLTTLAQQYVPLFVT), 1261–1281 (IPYQVLAATISFFSWYYPVGL), 1297–1317 (LMWLIMTLMFIYSSTLAQFCI), 1325–1345 (YAANWISLLLTISMIFCGVIA), 1353–1375 (FWVFLYRCTPLTYLTSAMMSIGL), and 1451–1471 (GIFIVFIVFNMAATVFSYWLF).

Belongs to the ABC transporter superfamily. ABCG family. PDR (TC 3.A.1.205) subfamily.

The protein localises to the membrane. This chain is Opaque-specific ABC transporter CDR3 (CDR3), found in Candida albicans (Yeast).